Reading from the N-terminus, the 88-residue chain is Small ribosomal subunit protein bS18 (88 aa).

The disordered stretch occupies residues 1–26; sequence MAFAQSGGAGGGGGQRRPFFRRRKTC.

Belongs to the bacterial ribosomal protein bS18 family. In terms of assembly, part of the 30S ribosomal subunit. Forms a tight heterodimer with protein bS6.

In terms of biological role, binds as a heterodimer with protein bS6 to the central domain of the 16S rRNA, where it helps stabilize the platform of the 30S subunit. In Xanthobacter autotrophicus (strain ATCC BAA-1158 / Py2), this protein is Small ribosomal subunit protein bS18.